The chain runs to 323 residues: Cytochrome c biogenesis protein CcsA (323 aa).

A run of 8 helical transmembrane segments spans residues Ile9–Leu29, Met45–Tyr62, Leu71–Phe91, Leu98–Leu118, Met143–Ile163, Ile227–Asn247, Thr261–His275, and Val285–Val305.

It belongs to the CcmF/CycK/Ccl1/NrfE/CcsA family. May interact with Ccs1.

The protein resides in the plastid. It localises to the chloroplast thylakoid membrane. Required during biogenesis of c-type cytochromes (cytochrome c6 and cytochrome f) at the step of heme attachment. The polypeptide is Cytochrome c biogenesis protein CcsA (Calycanthus floridus var. glaucus (Eastern sweetshrub)).